The following is a 336-amino-acid chain: HTH-type transcriptional repressor PurR (336 aa).

In terms of domain architecture, HTH lacI-type spans 2 to 56 (ATIKDVAKLAGVSTTTVSHVINKTRFVAEDTSKAVWDAIQQLNYSPSAVARSLKV). Positions 4–23 (IKDVAKLAGVSTTTVSHVIN) form a DNA-binding region, H-T-H motif. Residues 48-56 (SAVARSLKV) mediate DNA binding. Hypoxanthine-binding residues include Tyr-73, Lys-188, Phe-219, and Asp-273.

Homodimer.

The protein operates within purine metabolism; purine nucleotide biosynthesis [regulation]. Is the main repressor of the genes involved in the de novo synthesis of purine nucleotides, regulating purB, purC, purEK, purF, purHD, purL, purMN and guaBA expression. PurR is allosterically activated to bind its cognate DNA by binding the purine corepressors, hypoxanthine or guanine, thereby effecting transcription repression. The chain is HTH-type transcriptional repressor PurR from Actinobacillus pleuropneumoniae serotype 5b (strain L20).